A 367-amino-acid chain; its full sequence is UDP-N-acetylglucosamine--N-acetylmuramyl-(pentapeptide) pyrophosphoryl-undecaprenol N-acetylglucosamine transferase (367 aa).

Residues 15–17, Asn127, Arg163, Ser191, Ile249, and Gln294 each bind UDP-N-acetyl-alpha-D-glucosamine; that span reads TGG.

It belongs to the glycosyltransferase 28 family. MurG subfamily.

Its subcellular location is the cell inner membrane. The enzyme catalyses di-trans,octa-cis-undecaprenyl diphospho-N-acetyl-alpha-D-muramoyl-L-alanyl-D-glutamyl-meso-2,6-diaminopimeloyl-D-alanyl-D-alanine + UDP-N-acetyl-alpha-D-glucosamine = di-trans,octa-cis-undecaprenyl diphospho-[N-acetyl-alpha-D-glucosaminyl-(1-&gt;4)]-N-acetyl-alpha-D-muramoyl-L-alanyl-D-glutamyl-meso-2,6-diaminopimeloyl-D-alanyl-D-alanine + UDP + H(+). The protein operates within cell wall biogenesis; peptidoglycan biosynthesis. Cell wall formation. Catalyzes the transfer of a GlcNAc subunit on undecaprenyl-pyrophosphoryl-MurNAc-pentapeptide (lipid intermediate I) to form undecaprenyl-pyrophosphoryl-MurNAc-(pentapeptide)GlcNAc (lipid intermediate II). The polypeptide is UDP-N-acetylglucosamine--N-acetylmuramyl-(pentapeptide) pyrophosphoryl-undecaprenol N-acetylglucosamine transferase (Burkholderia ambifaria (strain MC40-6)).